An 823-amino-acid chain; its full sequence is Putative E3 ubiquitin-protein ligase RF4 (823 aa).

Disordered stretches follow at residues 24–72 (TVSP…NGSV), 224–291 (SKLS…CSGS), and 432–464 (ESVT…SEEK). The span at 61-72 (KPQNHLSGNGSV) shows a compositional bias: polar residues. Residues 224–240 (SKLSDSESLGAESNPPK) are compositionally biased toward low complexity. The segment covering 267–282 (FPNTPNSKKTQSSGTT) has biased composition (polar residues). Over residues 453 to 464 (SEKKSGSESEEK) the composition is skewed to basic and acidic residues. Positions 536 to 738 (ELKALRKERE…ELKLKSDYSR (203 aa)) form a coiled coil. The segment at 768 to 808 (CVMCLSEEMSVIFLPCAHQVLCFKCNQLHEKEGMMDCPSCR) adopts an RING-type zinc-finger fold.

The protein belongs to the RING-type zinc finger family.

It carries out the reaction S-ubiquitinyl-[E2 ubiquitin-conjugating enzyme]-L-cysteine + [acceptor protein]-L-lysine = [E2 ubiquitin-conjugating enzyme]-L-cysteine + N(6)-ubiquitinyl-[acceptor protein]-L-lysine.. It participates in protein modification; protein ubiquitination. The chain is Putative E3 ubiquitin-protein ligase RF4 (RF4) from Arabidopsis thaliana (Mouse-ear cress).